The chain runs to 119 residues: Protein sigma-1-small (119 aa).

This sequence belongs to the orthoreovirus sigma-1s protein family.

In Mammalia (T1L), this protein is Protein sigma-1-small (S1).